We begin with the raw amino-acid sequence, 65 residues long: Large ribosomal subunit protein bL35 (65 aa).

Residues 28–53 (NGSHNLEKKNRKRTRRLHQSTMLDNA) form a disordered region. Residues 36 to 45 (KNRKRTRRLH) show a composition bias toward basic residues.

The protein belongs to the bacterial ribosomal protein bL35 family.

In Chlorobium luteolum (strain DSM 273 / BCRC 81028 / 2530) (Pelodictyon luteolum), this protein is Large ribosomal subunit protein bL35.